Reading from the N-terminus, the 81-residue chain is Large ribosomal subunit protein bL27 (81 aa).

The tract at residues methionine 1–glycine 22 is disordered.

The protein belongs to the bacterial ribosomal protein bL27 family.

In Rhodopirellula baltica (strain DSM 10527 / NCIMB 13988 / SH1), this protein is Large ribosomal subunit protein bL27.